Reading from the N-terminus, the 339-residue chain is GTP 3',8-cyclase (339 aa).

One can recognise a Radical SAM core domain in the interval 13–249 (RYGRPLRDLR…GEVAQRHAFA (237 aa)). GTP is bound at residue Arg-22. 2 residues coordinate [4Fe-4S] cluster: Cys-29 and Cys-33. Tyr-35 contacts S-adenosyl-L-methionine. Position 36 (Cys-36) interacts with [4Fe-4S] cluster. Arg-75 contributes to the GTP binding site. S-adenosyl-L-methionine is bound at residue Gly-79. Thr-106 lines the GTP pocket. Ser-130 contacts S-adenosyl-L-methionine. Lys-168 provides a ligand contact to GTP. S-adenosyl-L-methionine is bound at residue Met-202. Residues Cys-266 and Cys-269 each contribute to the [4Fe-4S] cluster site. A GTP-binding site is contributed by 271–273 (RAR). Cys-283 lines the [4Fe-4S] cluster pocket.

This sequence belongs to the radical SAM superfamily. MoaA family. Monomer and homodimer. [4Fe-4S] cluster is required as a cofactor.

The enzyme catalyses GTP + AH2 + S-adenosyl-L-methionine = (8S)-3',8-cyclo-7,8-dihydroguanosine 5'-triphosphate + 5'-deoxyadenosine + L-methionine + A + H(+). Its pathway is cofactor biosynthesis; molybdopterin biosynthesis. In terms of biological role, catalyzes the cyclization of GTP to (8S)-3',8-cyclo-7,8-dihydroguanosine 5'-triphosphate. In Xanthomonas campestris pv. campestris (strain 8004), this protein is GTP 3',8-cyclase.